The sequence spans 151 residues: Large-conductance mechanosensitive channel (151 aa).

2 helical membrane passes run 12–32 and 71–91; these read GNIV…ALVT and VLLS…FLVV. The tract at residues 125–151 is disordered; sequence NSNSSGRHEAPGTAGTPPPNYGPRADT.

It belongs to the MscL family. In terms of assembly, homopentamer.

It is found in the cell membrane. Functionally, channel that opens in response to stretch forces in the membrane lipid bilayer. May participate in the regulation of osmotic pressure changes within the cell. The polypeptide is Large-conductance mechanosensitive channel (Mycobacterium ulcerans (strain Agy99)).